A 251-amino-acid chain; its full sequence is HTH-type transcriptional regulator UlaR (251 aa).

In terms of domain architecture, HTH deoR-type spans 3-58 (EAQRHQILLDMLAQLGFVTVENVIERLGISPATARRDINKLDESGKLKKVRNGAEA). A DNA-binding region (H-T-H motif) is located at residues 20 to 39 (VTVENVIERLGISPATARRD).

The protein localises to the cytoplasm. Functionally, represses ulaG and the ulaABCDEF operon. The sequence is that of HTH-type transcriptional regulator UlaR from Salmonella arizonae (strain ATCC BAA-731 / CDC346-86 / RSK2980).